The sequence spans 413 residues: Glucose-1-phosphatase (413 aa).

Residues 1–22 form the signal peptide; that stretch reads MKKSLLAVAVAGAVLLSSAVQA. Residue Arg39 participates in substrate binding. His40 serves as the catalytic Nucleophile. Residues Arg43, Arg116, and Glu218 each contribute to the substrate site. The active-site Proton donor is Asp312.

This sequence belongs to the histidine acid phosphatase family. Homodimer.

It localises to the periplasm. It carries out the reaction alpha-D-glucose 1-phosphate + H2O = D-glucose + phosphate. This chain is Glucose-1-phosphatase (agp), found in Salmonella typhimurium (strain LT2 / SGSC1412 / ATCC 700720).